Here is an 85-residue protein sequence, read N- to C-terminus: Mitochondrial import inner membrane translocase subunit TIM9 (85 aa).

The Twin CX3C motif motif lies at 35–59 (CFTDCVNDFTSKALSSREESCLEKC). Disulfide bonds link cysteine 35–cysteine 59 and cysteine 39–cysteine 55.

The protein belongs to the small Tim family. As to quaternary structure, heterohexamer; composed of 3 copies of TIM9 and 3 copies of TIM10, named soluble 70 kDa complex. Associates with the TIM22 complex, whose core is composed of TIM22 and TIM54. Interacts with the transmembrane regions of multi-pass transmembrane proteins in transit.

Its subcellular location is the mitochondrion inner membrane. Functionally, mitochondrial intermembrane chaperone that participates in the import and insertion of multi-pass transmembrane proteins into the mitochondrial inner membrane. Also required for the transfer of beta-barrel precursors from the TOM complex to the sorting and assembly machinery (SAM complex) of the outer membrane. Acts as a chaperone-like protein that protects the hydrophobic precursors from aggregation and guide them through the mitochondrial intermembrane space. In Yarrowia lipolytica (strain CLIB 122 / E 150) (Yeast), this protein is Mitochondrial import inner membrane translocase subunit TIM9 (TIM9).